A 440-amino-acid chain; its full sequence is MLRLQMMEGLIVKRTLLLILLLVISVSYALPIEPIIYVNKSTVDYQNAKILMDNFYSSREININGDNVTIVINDIMYIPSIDELEIKNGDKNLIIKFDRDGNKVKYKDIECIEYLNLKKGEEISLFNKSYIVEDITSNYVILKEKDGKEVLTNESFEYDGYKVVVKLVSSDLNTIIVDIYKNEKVLDSPKLTKGKIYYMKGGTLGLMYENCTRIGKGYRFTFRVYSTIKIEEGEDYPLDKEFKVKEISTDKIKLEYKNIDSLGNEIYLFNYTIIPEKCYKDYVLFKVIKRKEKTVDVKDVAYIGDGIYAVKVNNTVHVFYKGKELKNHEKIYLGSVDVYSSNPLNVNKDIILIGGPKVNKIVKELEDKGLLKVNISTNYPGNNRGIILKIKNPYNDNNIYILAGSDRWGTKAAILVFLTKYNDEDTLMVEWDKGEIKIIK.

The N-terminal stretch at 1 to 29 (MLRLQMMEGLIVKRTLLLILLLVISVSYA) is a signal peptide.

Belongs to the Mj S-layer protein family.

This is an uncharacterized protein from Methanocaldococcus jannaschii (strain ATCC 43067 / DSM 2661 / JAL-1 / JCM 10045 / NBRC 100440) (Methanococcus jannaschii).